The chain runs to 314 residues: Hydrolase 4 (314 aa).

The short motif at 73 to 75 (HGA) is the Involved in the stabilization of the negatively charged intermediate by the formation of the oxyanion hole element. Residues Ser-165 and Asp-260 contribute to the active site.

The protein belongs to the 'GDXG' lipolytic enzyme family.

It participates in alkaloid biosynthesis. Its function is as follows. Component of the seco-iridoid and derivatives monoterpenoid indole alkaloids (MIAs, e.g. vincadifformine) biosynthesis pathway. Catalyzes the conversion of O-acetylstemmadenine (OAS) to vincadifformine. May also trigger the formation of additional unknown MIAs. The protein is Hydrolase 4 of Catharanthus roseus (Madagascar periwinkle).